We begin with the raw amino-acid sequence, 2254 residues long: Acetyl-CoA carboxylase 1 (2254 aa).

A Biotin carboxylation domain is found at proline 36–alanine 543. Residues asparagine 189–methionine 381 enclose the ATP-grasp domain. Cysteine 215–leucine 272 serves as a coordination point for ATP. Mg(2+) is bound by residues glutamate 338, glutamate 352, and asparagine 354. Residues glutamate 338, glutamate 352, and asparagine 354 each contribute to the Mn(2+) site. The active site involves arginine 356. Residues leucine 670–aspartate 744 form the Biotinyl-binding domain. An N6-biotinyllysine modification is found at lysine 711. Threonine 1031 carries the post-translational modification Phosphothreonine. At serine 1192 the chain carries Phosphoserine. The CoA carboxyltransferase N-terminal domain occupies glutamine 1492–alanine 1831. Residues glutamine 1492 to glutamate 2150 form a carboxyltransferase region. The CoA site is built by arginine 1740, lysine 2041, and arginine 2043. A CoA carboxyltransferase C-terminal domain is found at proline 1835–glutamate 2150.

As to quaternary structure, homodimer. Requires biotin as cofactor. The cofactor is Mg(2+). Mn(2+) is required as a cofactor. Expressed in roots, trichomes, epidermal leaf cells, siliques, petals, anthers, and seeds.

It localises to the cytoplasm. Its subcellular location is the cytosol. The catalysed reaction is hydrogencarbonate + acetyl-CoA + ATP = malonyl-CoA + ADP + phosphate + H(+). The enzyme catalyses N(6)-biotinyl-L-lysyl-[protein] + hydrogencarbonate + ATP = N(6)-carboxybiotinyl-L-lysyl-[protein] + ADP + phosphate + H(+). It functions in the pathway lipid metabolism; malonyl-CoA biosynthesis; malonyl-CoA from acetyl-CoA: step 1/1. In terms of biological role, multifunctional enzyme that catalyzes the carboxylation of acetyl-CoA, forming malonyl-CoA, which is used in the plastid for fatty acid synthesis and in the cytosol in various biosynthetic pathways including fatty acid elongation. Required for very long chain fatty acids elongation. Necessary for embryo and plant development. Plays a central function in embryo morphogenesis, especially in apical meristem development. Involved in cell proliferation and tissue patterning. May act as a repressor of cytokinin response. The chain is Acetyl-CoA carboxylase 1 (ACC1) from Arabidopsis thaliana (Mouse-ear cress).